We begin with the raw amino-acid sequence, 844 residues long: Neuronal PAS domain-containing protein 4B (844 aa).

The interval 61–74 (KMYRSTKGASKARR) is basic motif; degenerate. Residues 61–114 (KMYRSTKGASKARRDQINAEIRSLKELLPISDADKARLSYLHIMSLACIYTRKS) form the bHLH domain. The segment at 75–114 (DQINAEIRSLKELLPISDADKARLSYLHIMSLACIYTRKS) is helix-loop-helix motif. 2 consecutive PAS domains span residues 132–190 (SLPE…PVDH) and 294–343 (DMRI…LHNG). Polar residues predominate over residues 410-422 (SRQSSDPLSSPDQ). Disordered regions lie at residues 410-432 (SRQS…SGLS), 444-479 (GRSS…GGGH), 702-725 (PLPN…SYSQ), and 757-784 (TEGG…EAPA). Residues 704–716 (PNLPSPSPVPPSP) are compositionally biased toward pro residues.

In terms of assembly, efficient DNA binding requires dimerization with another bHLH protein.

It localises to the nucleus. Its function is as follows. Transcription factor expressed in neurons of the brain that regulates the excitatory-inhibitory balance within neural circuits and is required for contextual memory in the hippocampus. Plays a key role in the structural and functional plasticity of neurons. Acts as an early-response transcription factor in both excitatory and inhibitory neurons, where it induces distinct but overlapping sets of late-response genes in these two types of neurons, allowing the synapses that form on inhibitory and excitatory neurons to be modified by neuronal activity in a manner specific to their function within a circuit, thereby facilitating appropriate circuit responses to sensory experience. This Danio rerio (Zebrafish) protein is Neuronal PAS domain-containing protein 4B (npas4b).